The primary structure comprises 337 residues: Outer membrane protein assembly factor BamC (337 aa).

Residues 1–16 form the signal peptide; it reads MKKWLFPFAFVATLAG. Residue Cys-17 is the site of N-palmitoyl cysteine attachment. Cys-17 is lipidated: S-diacylglycerol cysteine.

The protein belongs to the BamC family. Part of the Bam complex.

It is found in the cell outer membrane. Part of the outer membrane protein assembly complex, which is involved in assembly and insertion of beta-barrel proteins into the outer membrane. The protein is Outer membrane protein assembly factor BamC of Pasteurella multocida (strain Pm70).